A 157-amino-acid chain; its full sequence is Transcription factor HES-2 (157 aa).

A bHLH domain is found at leucine 13–glutamine 70. Residues tyrosine 86–leucine 119 form the Orange domain. The disordered stretch occupies residues valine 124–tryptophan 157. The segment covering threonine 132–glycine 149 has biased composition (pro residues). The WRPW motif signature appears at tryptophan 154–tryptophan 157.

Transcription repression requires formation of a complex with a corepressor protein of the Groucho/TLE family.

Its subcellular location is the nucleus. In terms of biological role, transcriptional repressor of genes that require a bHLH protein for their transcription. The polypeptide is Transcription factor HES-2 (Hes2) (Mus musculus (Mouse)).